The sequence spans 371 residues: Jasmonate-induced oxygenase 2 (371 aa).

The Fe2OG dioxygenase domain occupies 219-320; it reads NIGACLRVNY…RVSLAFFYNP (102 aa). Arginine 225 is a binding site for jasmonate. Residues asparagine 227 and tyrosine 229 each contribute to the 2-oxoglutarate site. The Fe cation site is built by histidine 244, aspartate 246, and histidine 301. Residues arginine 311 and serine 313 each contribute to the 2-oxoglutarate site. The jasmonate site is built by arginine 350 and arginine 354.

Belongs to the iron/ascorbate-dependent oxidoreductase family. Requires L-ascorbate as cofactor. Fe(2+) is required as a cofactor.

It catalyses the reaction jasmonate + 2-oxoglutarate + O2 = (1R,2R)-12-hydroxyjasmonate + succinate + CO2. 2-oxoglutarate-dependent dioxygenase involved in the oxidation of jasmonate (JA), a stress-induced phytohormone synthesized in response to attack by pathogens and herbivores, which triggers the activation of defense responses via the JA-mediated signaling pathway. Converts JA to 12-hydroxyjasmonate (12OH-JA), an inactive form of JA. Is specific to free JA, and cannot oxidize the bioactive form jasmonoyl-L-isoleucine (JA-Ile) or other JA-amino acid conjugates. Prevents over-accumulation of JA and indirectly its bioactive form JA-Ile under stress response. Acts as a negative regulator of JA-mediated defense signaling, by contributing to 12OH-JA accumulation, which represses JA defense responses upon infection by the fungal pathogen Botrytis cinerea. Acts as a negative regulator of JA-mediated defense responses upon infestation by the herbivorous caterpillar Mamestra brassicae. May be involved in the catabolism of cytotoxic polycyclic aromatic hydrocarbons (PAHs). The polypeptide is Jasmonate-induced oxygenase 2 (Arabidopsis thaliana (Mouse-ear cress)).